A 437-amino-acid chain; its full sequence is MILLWSCLLVAVVGILGTATPQPGNSSLHRLTRQLLQQYHKEVRPVYNWAEATTVYLDLCVHAVLDVDVQNQKLKTSMWYREVWNDEFLSWNSSLFDDIQEISLPLSAIWAPDIIINEFVDVERSPDLPYVYVNSSGTIRNHKPIQVVSACSLQTYAFPFDIQNCSLTFNSILHTVEDIDLGFLRNQEDIENDKRSFLNDSEWQLLSVTSTYHIRQSSAGDFAQIRFNVVIRRCPLAYVVSLLIPSIFLMLVDLGSFYLPPNCRARIVFKTNVLVGYTVFRVNMSDEVPRSAGCTSLIGVFFTVCMALLVLSLSKSILLIKFLYEERHSEQERPLMCLRGDSDANESRLYLRAPCAEDTESPVRQEHQVPSDTLKDFWFQLQSINNSLRTRDQVYQKEVEWLAILCHFDQLLFRIYLAVLGLYTVTLCSLWALWSRM.

The first 21 residues, 1 to 21, serve as a signal peptide directing secretion; the sequence is MILLWSCLLVAVVGILGTATP. At 22-235 the chain is on the extracellular side; it reads QPGNSSLHRL…RFNVVIRRCP (214 aa). N-linked (GlcNAc...) asparagine glycosylation is found at Asn25, Asn92, and Asn134. A disulfide bridge links Cys151 with Cys165. A helical transmembrane segment spans residues 236 to 255; it reads LAYVVSLLIPSIFLMLVDLG. Residues 256-266 lie on the Cytoplasmic side of the membrane; that stretch reads SFYLPPNCRAR. Residues 267-284 traverse the membrane as a helical segment; it reads IVFKTNVLVGYTVFRVNM. At 285 to 295 the chain is on the extracellular side; the sequence is SDEVPRSAGCT. A helical transmembrane segment spans residues 296-324; it reads SLIGVFFTVCMALLVLSLSKSILLIKFLY. At 325–410 the chain is on the cytoplasmic side; the sequence is EERHSEQERP…WLAILCHFDQ (86 aa). The HA-stretch; determines single-channel conductance in 5-HT3 receptors stretch occupies residues 377-409; that stretch reads FWFQLQSINNSLRTRDQVYQKEVEWLAILCHFD. Residues 411–434 traverse the membrane as a helical segment; the sequence is LLFRIYLAVLGLYTVTLCSLWALW. Topologically, residues 435–437 are extracellular; that stretch reads SRM.

This sequence belongs to the ligand-gated ion channel (TC 1.A.9) family. 5-hydroxytryptamine receptor (TC 1.A.9.2) subfamily. HTR3B sub-subfamily. As to quaternary structure, forms homopentameric as well as heteropentameric serotonin-activated cation-selective channel complexes with HTR3A. The homomeric complex is not functional. Heteropentameric complexes display properties which resemble that of neuronal serotonin-activated channels in vivo. In terms of processing, N-glycosylation is required for membrane localization. Expressed in peripheral neurons, but not in neurons of the central nervous system.

It is found in the postsynaptic cell membrane. It localises to the cell membrane. The enzyme catalyses Na(+)(in) = Na(+)(out). It catalyses the reaction K(+)(in) = K(+)(out). The catalysed reaction is Ca(2+)(in) = Ca(2+)(out). Functionally, forms serotonin (5-hydroxytryptamine/5-HT3)-activated cation-selective channel complexes, which when activated cause fast, depolarizing responses in neurons. This Rattus norvegicus (Rat) protein is 5-hydroxytryptamine receptor 3B.